The sequence spans 445 residues: Putative ankyrin repeat protein L797 (445 aa).

ANK repeat units lie at residues F73–S102, N285–G314, N315–Q344, and L346–I375.

This Acanthamoeba polyphaga (Amoeba) protein is Putative ankyrin repeat protein L797.